The sequence spans 406 residues: Putative F-box protein At5g38270 (406 aa).

Residues 20–67 (HDWSKLCPDILRSILESLSSTDFHRAKTVCSDWYSNWKTCVKPLCPWR) form the F-box domain.

The sequence is that of Putative F-box protein At5g38270 from Arabidopsis thaliana (Mouse-ear cress).